Reading from the N-terminus, the 240-residue chain is Probable peptide export permease protein YydJ (240 aa).

6 helical membrane-spanning segments follow: residues 13–33, 50–70, 97–117, 126–146, 153–173, and 210–230; these read VIIILGAMFVFLFLLGYFLLV, SYTVATQFGLMLFSFVIAFFI, IAVLFLECFAFITLGLLIISL, ALLLFLFSAVILQYILIIGTI, ILISIGVSIVYWMTSVILVAI, and VLFIILYLVSIIIINAIVLRF.

The complex is composed of 2 ATP-binding proteins (YydI), two transmembrane proteins (YydJ).

The protein localises to the cell membrane. Suggested to be part of an ABC transporter complex YydIJ involved in export of the modified peptide YydF. The protein is Probable peptide export permease protein YydJ (yydJ) of Bacillus subtilis (strain 168).